The following is a 339-amino-acid chain: Serine/threonine-protein kinase SAPK2 (339 aa).

The Protein kinase domain maps to 4-260; it reads YEVIKDIGSG…IPEIKNHPWF (257 aa). Residues 10-18 and Lys-33 each bind ATP; that span reads IGSGNFGVA. Asp-123 functions as the Proton acceptor in the catalytic mechanism. Residues 253-339 are C-terminal; it reads EIKNHPWFLK…EDSGDFVCAL (87 aa).

It belongs to the protein kinase superfamily. Ser/Thr protein kinase family. Phosphorylated.

The catalysed reaction is L-seryl-[protein] + ATP = O-phospho-L-seryl-[protein] + ADP + H(+). The enzyme catalyses L-threonyl-[protein] + ATP = O-phospho-L-threonyl-[protein] + ADP + H(+). Its function is as follows. May play a role in signal transduction of hyperosmotic response. Can phosphorylate BZIP46 in vitro. This is Serine/threonine-protein kinase SAPK2 (SAPK2) from Oryza sativa subsp. indica (Rice).